Reading from the N-terminus, the 426-residue chain is Serine--tRNA ligase (426 aa).

Residue 233 to 235 participates in L-serine binding; that stretch reads TAE. Residue 264-266 coordinates ATP; the sequence is RSE. Residue E287 coordinates L-serine. 351 to 354 serves as a coordination point for ATP; the sequence is EISS. S387 contacts L-serine.

This sequence belongs to the class-II aminoacyl-tRNA synthetase family. Type-1 seryl-tRNA synthetase subfamily. Homodimer. The tRNA molecule binds across the dimer.

Its subcellular location is the cytoplasm. It catalyses the reaction tRNA(Ser) + L-serine + ATP = L-seryl-tRNA(Ser) + AMP + diphosphate + H(+). The catalysed reaction is tRNA(Sec) + L-serine + ATP = L-seryl-tRNA(Sec) + AMP + diphosphate + H(+). It participates in aminoacyl-tRNA biosynthesis; selenocysteinyl-tRNA(Sec) biosynthesis; L-seryl-tRNA(Sec) from L-serine and tRNA(Sec): step 1/1. Its function is as follows. Catalyzes the attachment of serine to tRNA(Ser). Is also able to aminoacylate tRNA(Sec) with serine, to form the misacylated tRNA L-seryl-tRNA(Sec), which will be further converted into selenocysteinyl-tRNA(Sec). The sequence is that of Serine--tRNA ligase from Pseudomonas paraeruginosa (strain DSM 24068 / PA7) (Pseudomonas aeruginosa (strain PA7)).